A 114-amino-acid polypeptide reads, in one-letter code: Large ribosomal subunit protein bL19 (114 aa).

Belongs to the bacterial ribosomal protein bL19 family.

This protein is located at the 30S-50S ribosomal subunit interface and may play a role in the structure and function of the aminoacyl-tRNA binding site. This is Large ribosomal subunit protein bL19 from Clavibacter michiganensis subsp. michiganensis (strain NCPPB 382).